A 228-amino-acid polypeptide reads, in one-letter code: Large ribosomal subunit protein uL16 (228 aa).

It belongs to the universal ribosomal protein uL16 family. As to quaternary structure, component of the small ribosomal subunit. Mature ribosomes consist of a small (40S) and a large (60S) subunit. The 40S subunit contains about 33 different proteins and 1 molecule of RNA (18S). The 60S subunit contains about 49 different proteins and 3 molecules of RNA (25S, 5.8S and 5S).

The chain is Large ribosomal subunit protein uL16 (RPL10) from Pinus taeda (Loblolly pine).